The primary structure comprises 498 residues: Probable cytosol aminopeptidase (498 aa).

Residues K263 and D268 each coordinate Mn(2+). The active site involves K275. Residues D286, D345, and E347 each contribute to the Mn(2+) site. The active site involves R349.

The protein belongs to the peptidase M17 family. It depends on Mn(2+) as a cofactor.

It is found in the cytoplasm. It carries out the reaction Release of an N-terminal amino acid, Xaa-|-Yaa-, in which Xaa is preferably Leu, but may be other amino acids including Pro although not Arg or Lys, and Yaa may be Pro. Amino acid amides and methyl esters are also readily hydrolyzed, but rates on arylamides are exceedingly low.. The enzyme catalyses Release of an N-terminal amino acid, preferentially leucine, but not glutamic or aspartic acids.. In terms of biological role, presumably involved in the processing and regular turnover of intracellular proteins. Catalyzes the removal of unsubstituted N-terminal amino acids from various peptides. This Rhodopseudomonas palustris (strain BisA53) protein is Probable cytosol aminopeptidase.